The chain runs to 276 residues: Diaminopimelate epimerase (276 aa).

Substrate-binding residues include asparagine 13, glutamine 46, and asparagine 66. Catalysis depends on cysteine 75, which acts as the Proton donor. Substrate-binding positions include 76-77 (GN), asparagine 159, asparagine 192, and 210-211 (ER). The Proton acceptor role is filled by cysteine 219. 220–221 (GT) serves as a coordination point for substrate.

This sequence belongs to the diaminopimelate epimerase family. In terms of assembly, homodimer.

The protein localises to the cytoplasm. It carries out the reaction (2S,6S)-2,6-diaminopimelate = meso-2,6-diaminopimelate. It participates in amino-acid biosynthesis; L-lysine biosynthesis via DAP pathway; DL-2,6-diaminopimelate from LL-2,6-diaminopimelate: step 1/1. Its function is as follows. Catalyzes the stereoinversion of LL-2,6-diaminopimelate (L,L-DAP) to meso-diaminopimelate (meso-DAP), a precursor of L-lysine and an essential component of the bacterial peptidoglycan. The protein is Diaminopimelate epimerase of Pseudomonas syringae pv. tomato (strain ATCC BAA-871 / DC3000).